A 264-amino-acid chain; its full sequence is MRVYLDLMQKILDEGTVKSDRTGTGTVSLFGHQMRFNLAQGFPLVTTKKCHLRSIIHELLWFLNGDTNTAYLKEQGVSIWDEWADENGDLGPVYGAQWRSWPAADGAVIDQIQRAVDDIKHNPDSRRIIVSAWNVGELDKMALAPCHAFFQFYVADGKLSCQLYQRSCDVFLGLPFNIASYALLTHMMAQQCDLEVGDFVWTGGDVHLYSNHMEQTALQLSREPRPLPQLAIKRKPDSIFDYRFEDFEILGYDPHPGIKAPVAI.

Residue Arg-21 participates in dUMP binding. His-51 serves as a coordination point for (6R)-5,10-methylene-5,6,7,8-tetrahydrofolate. 126–127 (RR) contacts dUMP. Cys-146 serves as the catalytic Nucleophile. Residues 166–169 (RSCD), Asn-177, and 207–209 (HLY) each bind dUMP. Asp-169 contacts (6R)-5,10-methylene-5,6,7,8-tetrahydrofolate. Ala-263 is a (6R)-5,10-methylene-5,6,7,8-tetrahydrofolate binding site.

This sequence belongs to the thymidylate synthase family. Bacterial-type ThyA subfamily. As to quaternary structure, homodimer.

The protein resides in the cytoplasm. It carries out the reaction dUMP + (6R)-5,10-methylene-5,6,7,8-tetrahydrofolate = 7,8-dihydrofolate + dTMP. It participates in pyrimidine metabolism; dTTP biosynthesis. Functionally, catalyzes the reductive methylation of 2'-deoxyuridine-5'-monophosphate (dUMP) to 2'-deoxythymidine-5'-monophosphate (dTMP) while utilizing 5,10-methylenetetrahydrofolate (mTHF) as the methyl donor and reductant in the reaction, yielding dihydrofolate (DHF) as a by-product. This enzymatic reaction provides an intracellular de novo source of dTMP, an essential precursor for DNA biosynthesis. The chain is Thymidylate synthase from Aeromonas salmonicida (strain A449).